The following is a 92-amino-acid chain: Cell division protein FtsB (92 aa).

At 1-3 (MRL) the chain is on the cytoplasmic side. A helical membrane pass occupies residues 4 to 21 (FVFFMLCLLVLLQYHLWF). Over 22–92 (GKNGLGDRHN…TFFRIVPKED (71 aa)) the chain is Periplasmic. A coiled-coil region spans residues 28–62 (DRHNLQEEVTLILENNSELRQRNQMMFSEIKDLKE).

This sequence belongs to the FtsB family. As to quaternary structure, part of a complex composed of FtsB, FtsL and FtsQ.

It localises to the cell inner membrane. Essential cell division protein. May link together the upstream cell division proteins, which are predominantly cytoplasmic, with the downstream cell division proteins, which are predominantly periplasmic. This Psychromonas ingrahamii (strain DSM 17664 / CCUG 51855 / 37) protein is Cell division protein FtsB.